The primary structure comprises 627 residues: Glyco-Gag protein (627 aa).

Residues Leu-1–Arg-63 are Cytoplasmic-facing. The helical transmembrane segment at Ala-64 to Ser-86 threads the bilayer. Topologically, residues Glu-87 to Asp-627 are extracellular. Residue Asn-113 is glycosylated (N-linked (GlcNAc...) asparagine; by host). Over residues Pro-199–Pro-215 the composition is skewed to pro residues. 2 disordered regions span residues Pro-199 to Gly-310 and Arg-523 to Asp-627. 2 stretches are compositionally biased toward basic and acidic residues: residues Arg-523 to Arg-555 and Arg-575 to Lys-608. The CCHC-type zinc-finger motif lies at Cys-593–Lys-608.

Glycosylated by host. In terms of processing, cleaved by host near the middle of the molecule, releasing the c-terminal half containing capsid and nucleoprotein domains op GAG.

It localises to the host cell membrane. Its function is as follows. Plays a role in viral particle release. Presumably acts by facilitating the fission of the virion bud at the cell surface. May prevent the antiviral activity of murine APOBEC3. The polypeptide is Glyco-Gag protein (Friend murine leukemia virus (isolate 57) (FrMLV)).